We begin with the raw amino-acid sequence, 262 residues long: Phosphatase SCO2771 (262 aa).

Functionally, displays phosphatase activity against p-nitrophenyl phosphate (pNPP) in vitro; however, the physiological substrate is unknown. This Streptomyces coelicolor (strain ATCC BAA-471 / A3(2) / M145) protein is Phosphatase SCO2771.